Consider the following 571-residue polypeptide: MTRISRSAYAEIYGPTVVGGVGDRVRLADTLLLAEVEKDHTIFGEEVKFGGGKVIRDGMGQSQRLATDCVDTVITNALIIDAVTGIVKADIGIKDGLISGIGKAGNPDTQPGVTIIIGASTEVVAGEGLIVTAGAIDTHIHFICPQQIEEALATGTTTMIGGGTGPATGSLATTSTSGPWHMAAMLQALDTFPVNVGLFGKGSSSSHGALLEQVRAGAMGLKIHEDWASTPASIDTCLNVAEETDIQVAIHSDTLNESGFVEDTFAAFKGRTIHSFHTEGAGGGHAPDIIRAAGMPNVLPASTNPTMPFTRNTIDEHLDMVMVCHHLDPSIAEDLAFAESRIRRETIAAEDILHDLGAFSIMSSDSQAMGRVGEIVLRTWQTAHKMKLQRGPLQGDSERSDNERIKRYIAKYTINPAVAHGIAHLVGSVEVGKLADLVLWKPAFFGVKVNMVLKSGMAVSASIGDMGASISTPQPVQIRPMWGSHGKALRTSVAFVSQVSLSNPAVSELGLNKRLEAVRGCRGVTKHDMVRNNWLPAISVDPQTYQVYADGQLLRCEALAELPMAQRYFLF.

One can recognise a Urease domain in the interval 134–571; that stretch reads GAIDTHIHFI…LPMAQRYFLF (438 aa). Residues His-139, His-141, and Lys-222 each coordinate Ni(2+). Lys-222 carries the post-translational modification N6-carboxylysine. A substrate-binding site is contributed by His-224. Residues His-251 and His-277 each contribute to the Ni(2+) site. His-325 serves as the catalytic Proton donor. Asp-365 is a Ni(2+) binding site.

Belongs to the metallo-dependent hydrolases superfamily. Urease alpha subunit family. In terms of assembly, heterotrimer of UreA (gamma), UreB (beta) and UreC (alpha) subunits. Three heterotrimers associate to form the active enzyme. The cofactor is Ni cation. Post-translationally, carboxylation allows a single lysine to coordinate two nickel ions.

It localises to the cytoplasm. The enzyme catalyses urea + 2 H2O + H(+) = hydrogencarbonate + 2 NH4(+). It participates in nitrogen metabolism; urea degradation; CO(2) and NH(3) from urea (urease route): step 1/1. This chain is Urease subunit alpha, found in Bordetella bronchiseptica (strain ATCC BAA-588 / NCTC 13252 / RB50) (Alcaligenes bronchisepticus).